We begin with the raw amino-acid sequence, 834 residues long: Inner nuclear membrane protein SRC1 (834 aa).

The disordered stretch occupies residues 68 to 292 (DEGIVKMDRP…TANGTGHSTP (225 aa)). Residues 77 to 86 (PSSSPSIASP) are compositionally biased toward low complexity. 3 positions are modified to phosphoserine: Ser-78, Ser-80, and Ser-85. Acidic residues-rich tracts occupy residues 114 to 127 (VSND…DDDD) and 142 to 153 (DTDEVDDEEDDV). Polar residues predominate over residues 154 to 170 (ITSSSNKSDTNDFQQNS). Ser-181 bears the Phosphoserine mark. Basic and acidic residues predominate over residues 188 to 198 (NSKENKIDNKH). Phosphoserine occurs at positions 203, 204, and 206. Positions 243 to 266 (IKNTNRKPVSMDNFNDSLTSSGTE) are enriched in polar residues. Ser-301 is modified (phosphoserine). Residues 307–364 (PQKEVPSTILVPEVEQQEPSQSERTPSLFSSEGSGSESEAPLLPEITTPGPHQPMGNT) form a disordered region. Composition is skewed to low complexity over residues 317-329 (VPEV…SQSE) and 336-345 (SSEGSGSESE). Residue Thr-394 is modified to Phosphothreonine. Ser-427 carries the phosphoserine modification. Helical transmembrane passes span 455 to 475 (LLAL…GLWY) and 708 to 728 (IWLM…LKNY).

The protein resides in the nucleus inner membrane. Plays a role in sister chromatid separation. In Saccharomyces cerevisiae (strain ATCC 204508 / S288c) (Baker's yeast), this protein is Inner nuclear membrane protein SRC1 (SRC1).